We begin with the raw amino-acid sequence, 298 residues long: Heme A synthase (298 aa).

Over 1–6 (MHRSLK) the chain is Cytoplasmic. The helical transmembrane segment at 7–27 (IFGTLTSIGMVIVLMQGALVT) threads the bilayer. Residues 28–62 (KTESGEGCGATWPLCFGEVIPTNPAIETIIEYSHR) are Extracellular-facing. Cysteine 35 and cysteine 42 are oxidised to a cystine. Residue glutamate 58 is part of the active site. Histidine 61 is a heme o binding site. The chain crosses the membrane as a helical span at residues 63–83 (IVSGLLGAMVIILAIWAWRKL). The Cytoplasmic portion of the chain corresponds to 84–92 (SHIRETKVM). A helical membrane pass occupies residues 93–113 (AILAVLFIIFQGLLGAGAVVF). At 114–117 (GQSH) the chain is on the extracellular side. Residues 118 to 138 (AILALHFGISAISLATVVLLT) traverse the membrane as a helical segment. Histidine 123 serves as a coordination point for heme o. The Cytoplasmic portion of the chain corresponds to 139–158 (TLAFEDGKPNPPALIVKKGY). Residues 159–179 (KGYILAVFAYCYAVIYTGAYV) traverse the membrane as a helical segment. Over 180–209 (KHTQATLACGDFPLCNGQWIPMLSGPVGAH) the chain is Extracellular. A disulfide bridge connects residues cysteine 188 and cysteine 194. A helical membrane pass occupies residues 210 to 230 (FFHRVAGTLLLILLVVALIWT). Histidine 212 provides a ligand contact to heme b. The Cytoplasmic portion of the chain corresponds to 231–244 (LRKYSHYRSLVWTH). A helical membrane pass occupies residues 245–265 (ILCVILVLTQYATGISIVLTG). Residues 266–271 (NELFVA) are Extracellular-facing. Residues 272–292 (MMHALIVSILFTTLCYIVMIL) traverse the membrane as a helical segment. A heme b-binding site is contributed by histidine 274. The Cytoplasmic segment spans residues 293–298 (SRNKAV).

The protein belongs to the COX15/CtaA family. Type 1 subfamily. Interacts with CtaB. Heme b is required as a cofactor.

It is found in the cell membrane. The catalysed reaction is Fe(II)-heme o + 2 A + H2O = Fe(II)-heme a + 2 AH2. It functions in the pathway porphyrin-containing compound metabolism; heme A biosynthesis; heme A from heme O: step 1/1. In terms of biological role, catalyzes the conversion of heme O to heme A by two successive hydroxylations of the methyl group at C8. The first hydroxylation forms heme I, the second hydroxylation results in an unstable dihydroxymethyl group, which spontaneously dehydrates, resulting in the formyl group of heme A. The sequence is that of Heme A synthase from Halalkalibacterium halodurans (strain ATCC BAA-125 / DSM 18197 / FERM 7344 / JCM 9153 / C-125) (Bacillus halodurans).